A 203-amino-acid chain; its full sequence is GTP cyclohydrolase-2 (203 aa).

49-53 serves as a coordination point for GTP; sequence RIHSE. Zn(2+)-binding residues include C54, C65, and C67. Residues Q70, 92-94, and T114 each bind GTP; that span reads EGR. D126 functions as the Proton acceptor in the catalytic mechanism. R128 acts as the Nucleophile in catalysis. GTP contacts are provided by T149 and K154.

Belongs to the GTP cyclohydrolase II family. Requires Zn(2+) as cofactor.

The catalysed reaction is GTP + 4 H2O = 2,5-diamino-6-hydroxy-4-(5-phosphoribosylamino)-pyrimidine + formate + 2 phosphate + 3 H(+). The protein operates within cofactor biosynthesis; riboflavin biosynthesis; 5-amino-6-(D-ribitylamino)uracil from GTP: step 1/4. Functionally, catalyzes the conversion of GTP to 2,5-diamino-6-ribosylamino-4(3H)-pyrimidinone 5'-phosphate (DARP), formate and pyrophosphate. This is GTP cyclohydrolase-2 from Shewanella sp. (strain W3-18-1).